The primary structure comprises 142 residues: MFQGASSLNLDAKGRMTIPARHRDALLLQCEGRITLTKHPDGCLLLFPRPVWEMRREEIAKWPISARAWQRIFLGNASDVDFDGAGRILIAPELRTAAGLTRDVMMMGMGGHFEIWDAARLAESESDAIAAGMPDVLNDFSF.

SpoVT-AbrB domains lie at 5-51 (ASSL…PRPV) and 77-120 (ASDV…DAAR).

Belongs to the MraZ family. As to quaternary structure, forms oligomers.

It is found in the cytoplasm. Its subcellular location is the nucleoid. This chain is Transcriptional regulator MraZ, found in Herminiimonas arsenicoxydans.